The primary structure comprises 184 residues: MATIVDQAKAQMAKSVESTKENFSGIRTGRANPALLNGITVDYYGAPTPLKAVATIGVPEPRTLAVTPFDASQANAVEKALRDSDLGASPRRDGNVIRLTMPELTEERRKEYVKIAKGKAEDGKVAVRNIRRKAKESLDKAIKDGDMGEDEGDRLLKELDKVTKQTTDELDALLETKQKEIMEV.

The protein belongs to the RRF family.

The protein localises to the cytoplasm. Functionally, responsible for the release of ribosomes from messenger RNA at the termination of protein biosynthesis. May increase the efficiency of translation by recycling ribosomes from one round of translation to another. In Bifidobacterium adolescentis (strain ATCC 15703 / DSM 20083 / NCTC 11814 / E194a), this protein is Ribosome-recycling factor.